The primary structure comprises 251 residues: Protein DEEPER ROOTING 1 (251 aa).

The short motif at 46 to 52 (SLLAIGT) is the IGT motif element. Residues 64 to 105 (VENSSDNVQSVQDTVKFTEEEVDKIRKEFETLLAIKDQAEAQ) are a coiled coil.

It belongs to the LAZY family.

Involved in the control of root growth angle. Involved in cell elongation in the root tip that causes asymmetric root growth and downward bending of the root in response to gravity. The polypeptide is Protein DEEPER ROOTING 1 (Oryza sativa subsp. japonica (Rice)).